A 536-amino-acid chain; its full sequence is Bifunctional purine biosynthesis protein PurH (536 aa).

Positions 8–158 (IPAPDEVRIK…KNHAYVTIVT (151 aa)) constitute an MGS-like domain.

This sequence belongs to the PurH family.

It catalyses the reaction (6R)-10-formyltetrahydrofolate + 5-amino-1-(5-phospho-beta-D-ribosyl)imidazole-4-carboxamide = 5-formamido-1-(5-phospho-D-ribosyl)imidazole-4-carboxamide + (6S)-5,6,7,8-tetrahydrofolate. It carries out the reaction IMP + H2O = 5-formamido-1-(5-phospho-D-ribosyl)imidazole-4-carboxamide. It participates in purine metabolism; IMP biosynthesis via de novo pathway; 5-formamido-1-(5-phospho-D-ribosyl)imidazole-4-carboxamide from 5-amino-1-(5-phospho-D-ribosyl)imidazole-4-carboxamide (10-formyl THF route): step 1/1. The protein operates within purine metabolism; IMP biosynthesis via de novo pathway; IMP from 5-formamido-1-(5-phospho-D-ribosyl)imidazole-4-carboxamide: step 1/1. The polypeptide is Bifunctional purine biosynthesis protein PurH (Rhizobium meliloti (strain 1021) (Ensifer meliloti)).